We begin with the raw amino-acid sequence, 149 residues long: Prefoldin subunit alpha (149 aa).

Belongs to the prefoldin subunit alpha family. In terms of assembly, heterohexamer of two alpha and four beta subunits.

The protein resides in the cytoplasm. Functionally, molecular chaperone capable of stabilizing a range of proteins. Seems to fulfill an ATP-independent, HSP70-like function in archaeal de novo protein folding. In Methanospirillum hungatei JF-1 (strain ATCC 27890 / DSM 864 / NBRC 100397 / JF-1), this protein is Prefoldin subunit alpha.